We begin with the raw amino-acid sequence, 124 residues long: Fluoride-specific ion channel FluC (124 aa).

Transmembrane regions (helical) follow at residues 5 to 25, 38 to 58, 69 to 89, and 97 to 117; these read ILAV…AGTW, TLAV…WFLL, GLIV…LDTL, and ALIA…ATWA. Residues glycine 76 and threonine 79 each coordinate Na(+).

It belongs to the fluoride channel Fluc/FEX (TC 1.A.43) family.

The protein resides in the cell inner membrane. It catalyses the reaction fluoride(in) = fluoride(out). Na(+) is not transported, but it plays an essential structural role and its presence is essential for fluoride channel function. Fluoride-specific ion channel. Important for reducing fluoride concentration in the cell, thus reducing its toxicity. The polypeptide is Fluoride-specific ion channel FluC (Pseudomonas fluorescens (strain SBW25)).